A 417-amino-acid chain; its full sequence is NADH-quinone oxidoreductase subunit D (417 aa).

Belongs to the complex I 49 kDa subunit family. NDH-1 is composed of 14 different subunits. Subunits NuoB, C, D, E, F, and G constitute the peripheral sector of the complex.

The protein resides in the cell inner membrane. The enzyme catalyses a quinone + NADH + 5 H(+)(in) = a quinol + NAD(+) + 4 H(+)(out). Its function is as follows. NDH-1 shuttles electrons from NADH, via FMN and iron-sulfur (Fe-S) centers, to quinones in the respiratory chain. The immediate electron acceptor for the enzyme in this species is believed to be ubiquinone. Couples the redox reaction to proton translocation (for every two electrons transferred, four hydrogen ions are translocated across the cytoplasmic membrane), and thus conserves the redox energy in a proton gradient. The protein is NADH-quinone oxidoreductase subunit D of Legionella pneumophila subsp. pneumophila (strain Philadelphia 1 / ATCC 33152 / DSM 7513).